A 354-amino-acid chain; its full sequence is Phospho-N-acetylmuramoyl-pentapeptide-transferase (354 aa).

10 helical membrane-spanning segments follow: residues 27-47 (ATLL…INML), 73-93 (TMGG…WMDV), 97-117 (LVWA…LDDY), 138-158 (FVVA…YVPV), 162-182 (LYVP…VGAG), 193-213 (GLAI…AYLA), 230-250 (AGEL…FLWF), 256-276 (AVFM…VIAV), 282-302 (IVLA…IVQV), and 331-351 (TVVI…LATL).

It belongs to the glycosyltransferase 4 family. MraY subfamily. Requires Mg(2+) as cofactor.

The protein localises to the cell inner membrane. It catalyses the reaction UDP-N-acetyl-alpha-D-muramoyl-L-alanyl-gamma-D-glutamyl-meso-2,6-diaminopimeloyl-D-alanyl-D-alanine + di-trans,octa-cis-undecaprenyl phosphate = di-trans,octa-cis-undecaprenyl diphospho-N-acetyl-alpha-D-muramoyl-L-alanyl-D-glutamyl-meso-2,6-diaminopimeloyl-D-alanyl-D-alanine + UMP. It functions in the pathway cell wall biogenesis; peptidoglycan biosynthesis. Catalyzes the initial step of the lipid cycle reactions in the biosynthesis of the cell wall peptidoglycan: transfers peptidoglycan precursor phospho-MurNAc-pentapeptide from UDP-MurNAc-pentapeptide onto the lipid carrier undecaprenyl phosphate, yielding undecaprenyl-pyrophosphoryl-MurNAc-pentapeptide, known as lipid I. The sequence is that of Phospho-N-acetylmuramoyl-pentapeptide-transferase from Novosphingobium aromaticivorans (strain ATCC 700278 / DSM 12444 / CCUG 56034 / CIP 105152 / NBRC 16084 / F199).